Reading from the N-terminus, the 760-residue chain is MSPFELEFEGLKVQIGSIEGFEPRGEGPLPCPTVSDLADWDRKLFARYRVIAFPICDMCCMCTYGRCNLAEGRRGACGIDIRSNTARFTALKTCIGAACHAAHARHLVEYILEKLGDVEIDLGSEVDVMTPIFETLVGFKPKTVSDLEKGLEYIERELTKVLSSVHVGQEMDPHDYESKALHAGMIDNLALEIADVAQIAAFDMPKGEAPLVEFGPFAADDSKPCILLVGHNVAPGTEVLDYLEERGLDEEVEVLGICCTAWDVSRVDDRSKVIGPLSRQLHYVRMGIADVVVLDEQCIRADIVEEANEVGSRVIATRDLVMAGLPDVTDEPTEKIIEKMVSGEWMGVFIEDLEKAAEVAVEVAIRVHERRKKEIPQPDPKKLQKEAKRCLGCGDCERVCPNDLPIVEAMERAANGDFEGLADLFDRCVGCARCESECPTKLRVMNMIEDAWRLRTKEEKYKVRTGRGPIKDVEIRQVGGPIVMGDIPGVVAFVACPNYPDDVKQVGKMVEELLERNYIVLTSGCTAMALGMYTDEDGKTLYEKYEDRFDAGCLVNTGSCVSNAHILGACIKIAAIFAKKPLKGNFKEIADYILNRIGACGVLWGTMSQKALAISTGFTRWGIPIVYGPAGLKYQTLYIGDLDGDWTVYDARTGKECKEYCPIHLKYAAEDWREALVQAVKLCIRPNDTPQGRQTKLQNYIELYKEFYNELPPDLPLYVRDKNDVPITLRDEVMEYLEEVGWKPRKGITEPTLLEENVRG.

Residues cysteine 56, cysteine 59, cysteine 60, cysteine 62, cysteine 67, and cysteine 77 each contribute to the [4Fe-4S] cluster site. Histidine 100 is a binding site for CO. [Ni-4Fe-4S] cluster contacts are provided by histidine 231, cysteine 259, and cysteine 298. 4Fe-4S ferredoxin-type domains are found at residues 381 to 410 and 418 to 450; these read KKLQ…VEAM and FEGL…MIED. [4Fe-4S] cluster-binding residues include cysteine 390, cysteine 393, cysteine 396, cysteine 400, cysteine 428, cysteine 431, cysteine 434, and cysteine 438. [Ni-4Fe-4S] cluster is bound by residues cysteine 496, cysteine 525, and cysteine 560.

The protein belongs to the Ni-containing carbon monoxide dehydrogenase family. In terms of assembly, heterotetramer of two alpha and two epsilon subunits. The ACDS complex is made up of alpha, epsilon, beta, gamma and delta subunits with a probable stoichiometry of (alpha(2)epsilon(2))(4)-beta(8)-(gamma(1)delta(1))(8). The cofactor is [4Fe-4S] cluster. [Ni-4Fe-4S] cluster serves as cofactor.

It catalyses the reaction CO + 2 oxidized [2Fe-2S]-[ferredoxin] + H2O = 2 reduced [2Fe-2S]-[ferredoxin] + CO2 + 2 H(+). Part of the ACDS complex that catalyzes the reversible cleavage of acetyl-CoA, allowing autotrophic growth from CO(2). The alpha-epsilon subcomponent functions as a carbon monoxide dehydrogenase. The chain is Acetyl-CoA decarbonylase/synthase complex subunit alpha 1 from Methanopyrus kandleri (strain AV19 / DSM 6324 / JCM 9639 / NBRC 100938).